A 351-amino-acid polypeptide reads, in one-letter code: Heat-inducible transcription repressor HrcA (351 aa).

Belongs to the HrcA family.

Its function is as follows. Negative regulator of class I heat shock genes (grpE-dnaK-dnaJ and groELS operons). Prevents heat-shock induction of these operons. The polypeptide is Heat-inducible transcription repressor HrcA (Mycoplasma pneumoniae (strain ATCC 29342 / M129 / Subtype 1) (Mycoplasmoides pneumoniae)).